We begin with the raw amino-acid sequence, 185 residues long: MINEIKKDAQERMEKSVEALKNNLLKIRTGRAHPSLLSGISVEYYGAQTPLNQVANVVAEDSRTLAITVFDKELAGLVEKAIMMSDLGLNPMSAGTVIRVPLPPLTEERRKDLVKIVRGEAENGRVAIRNIRRDANGDVKALLKEKEISEDDDRRAQDEIQKLTDAAVKSIDEVLAVKEKELMEV.

This sequence belongs to the RRF family.

The protein localises to the cytoplasm. Functionally, responsible for the release of ribosomes from messenger RNA at the termination of protein biosynthesis. May increase the efficiency of translation by recycling ribosomes from one round of translation to another. The protein is Ribosome-recycling factor of Aliivibrio fischeri (strain ATCC 700601 / ES114) (Vibrio fischeri).